Here is a 287-residue protein sequence, read N- to C-terminus: MNAPISAAPVVTAGSVRFGNQLPLAVIAGPCQLESRGHALEVASALKEIATRLNISLVYKTSFDKANRTSGSAARGLGLAQSLPIFAEIRSSLGLPVLTDVHDASQCAEVAQAVDILQIPAFLCRQTDLLLAAAATGKVVNVKKGQFLAPWDMANVVAKITGAGNPNVLATERGVSFGYNTLISDMRSLPIMAKTTGAPVIFDATHSVQQPGGQGTSSGGQREFVPVLARAAVAVGVAGVFIETHPDPDHAPSDGPNMVPLAQFEGLLRTLMAFDALAKGQAADAIR.

It belongs to the KdsA family.

Its subcellular location is the cytoplasm. It carries out the reaction D-arabinose 5-phosphate + phosphoenolpyruvate + H2O = 3-deoxy-alpha-D-manno-2-octulosonate-8-phosphate + phosphate. The protein operates within carbohydrate biosynthesis; 3-deoxy-D-manno-octulosonate biosynthesis; 3-deoxy-D-manno-octulosonate from D-ribulose 5-phosphate: step 2/3. Its pathway is bacterial outer membrane biogenesis; lipopolysaccharide biosynthesis. This chain is 2-dehydro-3-deoxyphosphooctonate aldolase, found in Bradyrhizobium sp. (strain ORS 278).